The sequence spans 285 residues: Para-Rep C6 (285 aa).

The region spanning 3 to 99 (TRQSTSWVFT…VAGPWEYGLF (97 aa)) is the CRESS-DNA virus Rep endonuclease domain. The RCR-1 motif lies at 10–13 (VFTL). Positions 36 and 42 each coordinate a divalent metal cation. An RCR-2 motif is present at residues 42–44 (HLQ). The Nuclear localization signal motif lies at 52–74 (RNTTLRQAKYIFNGLNPHLEIAR). The active-site For DNA cleavage activity is Tyr82. An RCR-3 motif is present at residues 82–85 (YAMK). Asp87 serves as a coordination point for a divalent metal cation. A Nuclear localization signal motif is present at residues 99-105 (FIKRGSH). 175–183 (GPAGNEGKS) contributes to the ATP binding site.

Belongs to the nanoviridea/circoviridae replication-associated protein family. As to quaternary structure, homooligomer (Potential). Rep binds to repeated DNA motifs (iterons). It depends on Mg(2+) as a cofactor. The cofactor is Mn(2+).

The protein localises to the host nucleus. The enzyme catalyses ATP + H2O = ADP + phosphate + H(+). Functionally, initiates and terminates the replication only of its own subviral DNA molecule. The closed circular ssDNA genome is first converted to a superhelical dsDNA. Rep binds a specific hairpin at the genome origin of replication. Introduces an endonucleolytic nick within the intergenic region of the genome, thereby initiating the rolling circle replication (RCR). Following cleavage, binds covalently to the 5'-phosphate of DNA as a tyrosyl ester. The cleavage gives rise to a free 3'-OH that serves as a primer for the cellular DNA polymerase. The polymerase synthesizes the (+) strand DNA by rolling circle mechanism. After one round of replication, a Rep-catalyzed nucleotidyl transfer reaction releases a circular single-stranded virus genome, thereby terminating the replication. Displays origin-specific DNA cleavage, nucleotidyl transferase, ATPase and helicase activities. The sequence is that of Para-Rep C6 (C6) from Subterranean clover stunt C6 alphasatellite (SCSC6A).